The following is a 651-amino-acid chain: Peptidoglycan D,D-transpeptidase MrdA (651 aa).

The helical transmembrane segment at 30-50 (LVAFLGILLLTGVLFTNIYQL) threads the bilayer. Ser338 acts as the Acyl-ester intermediate in catalysis.

Belongs to the transpeptidase family. MrdA subfamily.

Its subcellular location is the cell inner membrane. It catalyses the reaction Preferential cleavage: (Ac)2-L-Lys-D-Ala-|-D-Ala. Also transpeptidation of peptidyl-alanyl moieties that are N-acyl substituents of D-alanine.. Its pathway is cell wall biogenesis; peptidoglycan biosynthesis. In terms of biological role, catalyzes cross-linking of the peptidoglycan cell wall. The protein is Peptidoglycan D,D-transpeptidase MrdA of Haemophilus influenzae (strain ATCC 51907 / DSM 11121 / KW20 / Rd).